The sequence spans 391 residues: Secreted aspartic protease 1 (391 aa).

The first 18 residues, 1 to 18, serve as a signal peptide directing secretion; it reads MFLKNIFIALAIALLVDA. Positions 19-50 are cleaved as a propeptide — activation peptide; the sequence is SPAKRSPGFVTLDFDVIKTPVNATGQEGKVKR. N40 carries an N-linked (GlcNAc...) asparagine glycan. In terms of domain architecture, Peptidase A1 spans 64–377; sequence YAADITIGSN…DLDDDKISLA (314 aa). D82 is a catalytic residue. Position 82-84 (82-84) interacts with pepstatin A; sequence DTG. The cysteines at positions 97 and 109 are disulfide-linked. Residue 135 to 136 coordinates pepstatin A; it reads GD. Positions 241 and 263 each coordinate Zn(2+). D267 is an active-site residue. 267–271 contacts pepstatin A; it reads DSGTT. C305 and C343 are disulfide-bonded.

It belongs to the peptidase A1 family. Monomer.

The protein localises to the secreted. It carries out the reaction Preferential cleavage at the carboxyl of hydrophobic amino acids, but fails to cleave 15-Leu-|-Tyr-16, 16-Tyr-|-Leu-17 and 24-Phe-|-Phe-25 of insulin B chain. Activates trypsinogen, and degrades keratin.. With respect to regulation, inhibited by pepstatin A analogs and squash aspartic peptidase inhibitor (SQAPI). Functionally, secreted aspartic peptidases (SAPs) are a group of ten acidic hydrolases considered as key virulence factors. These enzymes supply the fungus with nutrient amino acids as well as are able to degrade the selected host's proteins involved in the immune defense. Induces host inflammatory cytokine production in a proteolytic activity-independent way. Plays a role in tissue damage during superficial infection. Moreover, acts toward human hemoglobin though limited proteolysis to generate a variety of antimicrobial hemocidins, enabling to compete with the other microorganisms of the same physiological niche using the microbicidal peptides generated from the host protein. Plays a key role in defense against host by cleaving histatin-5 (Hst 5), a peptide from human saliva that carries out fungicidal activity. The cleavage rate decreases in an order of SAP2 &gt; SAP9 &gt; SAP3 &gt; SAP7 &gt; SAP4 &gt; SAP1 &gt; SAP8. The first cleavage occurs between residues 'Lys-17' and 'His-18' of Hst 5, giving DSHAKRHHGYKRKFHEK and HHSHRGY peptides. Further fragmentation by SAP1 results in AKRHHGYKRKFHEK and AKRHHGY products. In Candida albicans (strain SC5314 / ATCC MYA-2876) (Yeast), this protein is Secreted aspartic protease 1.